Reading from the N-terminus, the 358-residue chain is uncharacterized protein (358 aa).

An ATP-binding site is contributed by 29–36; that stretch reads GPINSGKT.

It belongs to the archaeal ATPase family.

This is an uncharacterized protein from Methanocaldococcus jannaschii (strain ATCC 43067 / DSM 2661 / JAL-1 / JCM 10045 / NBRC 100440) (Methanococcus jannaschii).